The primary structure comprises 314 residues: Vacuolar membrane protein VL3_4134 (314 aa).

The segment at 32-60 (KPTSSVVSETSSKSLPSLTSSAFSTSSGA) is disordered. The helical transmembrane segment at 93-113 (VYIAVGAVIGAIFISILIWWL) threads the bilayer. Residues S148, S254, and S274 each carry the phosphoserine modification. The interval 240–309 (EERKLNLNRP…PSMFLDDVLN (70 aa)) is disordered. Residues 254–269 (SPERKEKKINSMEGYH) show a composition bias toward basic and acidic residues.

Belongs to the PRM5 family.

The protein resides in the vacuole membrane. The protein is Vacuolar membrane protein VL3_4134 of Saccharomyces cerevisiae (strain Zymaflore VL3) (Baker's yeast).